We begin with the raw amino-acid sequence, 189 residues long: Low affinity inorganic phosphate transporter 2 (189 aa).

The Cytoplasmic segment spans residues 1-55 (TARYTALVAKDAKRAAADMGKVLHVEIDPEDAKVERMAKDESNQFGLFSWEFVRR). The helical transmembrane segment at 56-76 (HGLHLFGTCSTWFLLDIAFYS) threads the bilayer. The Extracellular segment spans residues 77–111 (QNLFQKDVFTAIGWIPPAKTMNAVQEVYKIARAQT). Residues 112-132 (LIALCSTVPGYWFTVAFIDII) traverse the membrane as a helical segment. Over 133–134 (GR) the chain is Cytoplasmic. The helical transmembrane segment at 135 to 155 (FAIQLMGFFFMTVFMFAIAIP) threads the bilayer. At 156-165 (YHHWTLQENR) the chain is on the extracellular side. A helical transmembrane segment spans residues 166–186 (IGFVIMYSLTFFFANFGPNAT). At 187–189 (TFV) the chain is on the cytoplasmic side.

Belongs to the major facilitator superfamily. Phosphate:H(+) symporter (TC 2.A.1.9) family.

Its subcellular location is the cell membrane. The enzyme catalyses phosphate(in) + H(+)(in) = phosphate(out) + H(+)(out). Functionally, low-affinity transporter for external inorganic phosphate (Pi). The chain is Low affinity inorganic phosphate transporter 2 from Petunia hybrida (Petunia).